A 441-amino-acid chain; its full sequence is ATP-dependent protease ATPase subunit HslU (441 aa).

ATP-binding positions include isoleucine 18, 60-65 (GVGKTE), aspartate 254, glutamate 319, and arginine 391.

The protein belongs to the ClpX chaperone family. HslU subfamily. As to quaternary structure, a double ring-shaped homohexamer of HslV is capped on each side by a ring-shaped HslU homohexamer. The assembly of the HslU/HslV complex is dependent on binding of ATP.

The protein resides in the cytoplasm. Functionally, ATPase subunit of a proteasome-like degradation complex; this subunit has chaperone activity. The binding of ATP and its subsequent hydrolysis by HslU are essential for unfolding of protein substrates subsequently hydrolyzed by HslV. HslU recognizes the N-terminal part of its protein substrates and unfolds these before they are guided to HslV for hydrolysis. The polypeptide is ATP-dependent protease ATPase subunit HslU (Shewanella halifaxensis (strain HAW-EB4)).